The chain runs to 185 residues: Ribosome-recycling factor (185 aa).

Belongs to the RRF family.

The protein resides in the cytoplasm. Its function is as follows. Responsible for the release of ribosomes from messenger RNA at the termination of protein biosynthesis. May increase the efficiency of translation by recycling ribosomes from one round of translation to another. In Halalkalibacterium halodurans (strain ATCC BAA-125 / DSM 18197 / FERM 7344 / JCM 9153 / C-125) (Bacillus halodurans), this protein is Ribosome-recycling factor.